The primary structure comprises 71 residues: Small ribosomal subunit protein bS21 (71 aa).

Basic residues predominate over residues 48 to 59 (KAAAAVKRHAKK). The interval 48 to 71 (KAAAAVKRHAKKVQREQRRRERLY) is disordered. Basic and acidic residues predominate over residues 60 to 71 (VQREQRRRERLY).

The protein belongs to the bacterial ribosomal protein bS21 family.

This chain is Small ribosomal subunit protein bS21, found in Azotobacter vinelandii (strain DJ / ATCC BAA-1303).